A 228-amino-acid chain; its full sequence is Cytochrome b6-f complex iron-sulfur subunit 2, chloroplastic (228 aa).

A chloroplast-targeting transit peptide spans 1-49; it reads MASSTLSPVTQLCSSKSGLSSVSQCLLLKPMKINSHGLGKDKRMKVKCM. Residues 71-91 traverse the membrane as a helical segment; the sequence is LLLGALSLPTAGMLVPYATFF. Positions 115-211 constitute a Rieske domain; sequence ASEWLKTHPP…ADIDDGKVVF (97 aa). Positions 157, 159, 175, and 178 each coordinate [2Fe-2S] cluster. Cysteines 162 and 177 form a disulfide.

It belongs to the Rieske iron-sulfur protein family. As to quaternary structure, the 4 large subunits of the cytochrome b6-f complex are cytochrome b6, subunit IV (17 kDa polypeptide, petD), cytochrome f and the Rieske protein, while the 4 small subunits are petG, petL, petM and petN. The complex functions as a dimer. The cofactor is [2Fe-2S] cluster.

The protein resides in the plastid. The protein localises to the chloroplast thylakoid membrane. The catalysed reaction is 2 oxidized [plastocyanin] + a plastoquinol + 2 H(+)(in) = 2 reduced [plastocyanin] + a plastoquinone + 4 H(+)(out). Component of the cytochrome b6-f complex, which mediates electron transfer between photosystem II (PSII) and photosystem I (PSI), cyclic electron flow around PSI, and state transitions. The protein is Cytochrome b6-f complex iron-sulfur subunit 2, chloroplastic (petC2) of Nicotiana tabacum (Common tobacco).